A 409-amino-acid chain; its full sequence is Multidrug efflux pump Tap (409 aa).

A run of 12 helical transmembrane segments spans residues 10–30 (LLILFAALTAGAGNGITIVAF), 46–66 (IVAMAGTLPLLVATLIAGAAV), 80–98 (LLSALSVAAVPVLALIFGV), 104–123 (AVLAVLAGLGAFFDPAGMTA), 144–168 (SVYEAVFNLGYIVGPGIGGLMIATL), 174–193 (MWVTAGAFCCSILAISVLRL), 218–240 (FVWYTPVLRTLAIVDLVATGLYM), 260–282 (LGWVLMALSIGGLLGALGYAVMS), 289–308 (ATMLTAVITLGVAMTVIAFL), 313–335 (LILVLCAIVGFVYGPIAPIYNYV), 348–370 (VVGVMGSLAYAAGPLGLILAGPL), and 375–397 (GLHATFLALSLPMLLLGVVAVFL).

The protein belongs to the major facilitator superfamily. Drug:H(+) antiporter-3 (DHA3) (TC 2.A.1.21) family.

It is found in the cell inner membrane. Its activity is regulated as follows. Efflux activity is inhibited by carbonyl cyanide m-chlorophenylhydrazone (CCCP) and reserpine, but not by o-vanadate or chlorpromazine (CPZ). Efflux pump that contributes to intrinsic antibiotic resistance. The pump uses the electrochemical gradient as a source of energy. Confers low-level resistance to tetracycline and to several aminoglycosides, including streptomycin, gentamicin, 2'-N-ethylnetilmicin and 6'-N-ethylnetilmicin. The protein is Multidrug efflux pump Tap of Mycolicibacterium fortuitum (Mycobacterium fortuitum).